The sequence spans 485 residues: Trigger factor (485 aa).

Residues Gly-169–Pro-261 enclose the PPIase FKBP-type domain.

This sequence belongs to the FKBP-type PPIase family. Tig subfamily.

The protein localises to the cytoplasm. It catalyses the reaction [protein]-peptidylproline (omega=180) = [protein]-peptidylproline (omega=0). In terms of biological role, involved in protein export. Acts as a chaperone by maintaining the newly synthesized protein in an open conformation. Functions as a peptidyl-prolyl cis-trans isomerase. This is Trigger factor from Trichodesmium erythraeum (strain IMS101).